The primary structure comprises 102 residues: MSNTMRCILIVCVALTLIAAGCNVEASNSRPPRKNDVNTMADAYKFLQDLDTYYGDRARVRFGKRGGPLMEMLRNRELENNMAKSINSGGELIRALDEEEVF.

The signal sequence occupies residues 1 to 29 (MSNTMRCILIVCVALTLIAAGCNVEASNS). The propeptide occupies 30 to 32 (RPP). Position 62 is a phenylalanine amide (Phe62). A propeptide spanning residues 66 to 102 (GGPLMEMLRNRELENNMAKSINSGGELIRALDEEEVF) is cleaved from the precursor.

The protein belongs to the NPY family.

The protein localises to the secreted. An integral part of the sensory system that mediates food signaling, providing the neural basis for the regulation of food response; coordinates larval foraging and social behavior changes during development. May have a hormonal role in females. This chain is Neuropeptide F, found in Drosophila pseudoobscura pseudoobscura (Fruit fly).